The following is a 222-amino-acid chain: Capsular polysaccharide type 5 biosynthesis protein cap5A (222 aa).

Helical transmembrane passes span 20–40 and 172–192; these read ILIILPLLFLIISAIVTFFVL and VVNLIGAFFLGLVVALIYIFF.

This sequence belongs to the CpsC/CapA family.

It is found in the cell membrane. Functionally, required for the biosynthesis of type 5 capsular polysaccharide (Cap5/CP5). Might act as the chain-length regulator. The polypeptide is Capsular polysaccharide type 5 biosynthesis protein cap5A (cap5A) (Staphylococcus aureus (strain Newman)).